A 382-amino-acid polypeptide reads, in one-letter code: ADP,ATP carrier protein, mitochondrial (382 aa).

A mitochondrion-targeting transit peptide spans 1–71 (MAEQANQPTV…PMMSSSPIFA (71 aa)). 3 Solcar repeats span residues 80–173 (KNFM…FKRL), 185–277 (KWFG…LKPV), and 285–371 (DNFF…LQIL). Helical transmembrane passes span 82-109 (FMIDFLMGGVSAAVSKTAAAPIERVKLL), 150-174 (TANVIRYFPTQALNFAFKDYFKRLF), 183-203 (YWKWFGGNLASGGAAGASSLF), 253-274 (FNISCVGIIVYRGLYFGMYDSL), and 288-308 (FASFALGWLITNGAGLASYPI). Residues Arg-155 and Lys-167 each contribute to the ADP site. Residue Arg-312 participates in ADP binding. The interval 312 to 317 (RRRMMM) is important for transport activity. The Nucleotide carrier signature motif motif lies at 312-317 (RRRMMM). A helical transmembrane segment spans residues 348–368 (AGANILRAIAGAGVLSGYDQL).

This sequence belongs to the mitochondrial carrier (TC 2.A.29) family. Monomer.

Its subcellular location is the mitochondrion inner membrane. The enzyme catalyses ADP(in) + ATP(out) = ADP(out) + ATP(in). Its activity is regulated as follows. The matrix-open state (m-state) is inhibited by the membrane-permeable bongkrekic acid (BKA). The cytoplasmic-open state (c-state) is inhibited by the membrane-impermeable toxic inhibitor carboxyatractyloside (CATR). In terms of biological role, ADP:ATP antiporter that mediates import of ADP into the mitochondrial matrix for ATP synthesis, and export of ATP out to fuel the cell. Cycles between the cytoplasmic-open state (c-state) and the matrix-open state (m-state): operates by the alternating access mechanism with a single substrate-binding site intermittently exposed to either the cytosolic (c-state) or matrix (m-state) side of the inner mitochondrial membrane. The sequence is that of ADP,ATP carrier protein, mitochondrial from Oryza sativa subsp. japonica (Rice).